The sequence spans 645 residues: Aminopeptidase P1 (645 aa).

Ser2 carries the N-acetylserine modification. Residues Arg69 and His420 each contribute to the a peptide site. Mn(2+) contacts are provided by Asp440, Asp451, and His514. A peptide contacts are provided by His514, His523, and Glu549. Positions 549 and 563 each coordinate Mn(2+).

It belongs to the peptidase M24B family. Homodimer. Interacts with N-1-naphthylphthalamic acid (NPA). Mn(2+) serves as cofactor. Requires Zn(2+) as cofactor. Post-translationally, glycosylated. Also present in a non-glycosylated form. Ubiquitous with preferential expression in 5 days-old seedlings, roots, flowers, inflorescences and rosette leaves (at protein levels).

The protein resides in the cytoplasm. It is found in the cell membrane. It localises to the microsome membrane. The enzyme catalyses Release of any N-terminal amino acid, including proline, that is linked to proline, even from a dipeptide or tripeptide.. Inhibited by EGTA and apstatin, and, to some extent, by the flavonoid kaempferol. Its function is as follows. Catalyzes the removal of a penultimate prolyl residue from the N-termini of peptides, such as Arg-Pro-Pro. Aminopeptidase that binds to the auxin transport inhibitor N-1-naphthylphthalamic acid (NPA). May play a negative role in the regulation of PIN auxin transport proteins. The polypeptide is Aminopeptidase P1 (Arabidopsis thaliana (Mouse-ear cress)).